Reading from the N-terminus, the 511-residue chain is Adenosine deaminase 2 (511 aa).

The N-terminal stretch at 1-29 is a signal peptide; it reads MLVDGPSEWPALRFLLLAVAMSFFGSALS. Residues 30-100 form a dimerization region; that stretch reads IDETRAHLLL…HLIERSQVFN (71 aa). Positions 112 and 114 each coordinate Zn(2+). Substrate is bound at residue D115. N-linked (GlcNAc...) asparagine glycosylation occurs at N127. Residues 127-185 form a PRB domain region; sequence NVTYRPHCHICFTPKGIMQFRFAHPTPRTSEKCSKWILLEDYRKRVQNVTEFDDSLLRN. An intrachain disulfide couples C137 to C159. N-linked (GlcNAc...) asparagine glycosylation is found at N174 and N185. Residues 204–211, H293, and G326 contribute to the substrate site; that span reads WSKFETIF. Residue H356 participates in Zn(2+) binding. E359 functions as the Proton donor in the catalytic mechanism. Residue N378 is glycosylated (N-linked (GlcNAc...) asparagine). Catalysis depends on H384, which acts as the Proton acceptor. Zn(2+) is bound at residue D441. D442 contributes to the substrate binding site.

This sequence belongs to the metallo-dependent hydrolases superfamily. Adenosine and AMP deaminases family. ADGF subfamily. Homodimer. Interacts with adenosine receptors. Binds heparin. The cofactor is Zn(2+).

It localises to the secreted. It catalyses the reaction adenosine + H2O + H(+) = inosine + NH4(+). Its function is as follows. Adenosine deaminase that may contribute to the degradation of extracellular adenosine, a signaling molecule that controls a variety of cellular responses. Requires elevated adenosine levels for optimal enzyme activity. Binds to cell surfaces via proteoglycans and may play a role in the regulation of cell proliferation and differentiation, independently of its enzyme activity. The sequence is that of Adenosine deaminase 2 from Pongo abelii (Sumatran orangutan).